Consider the following 555-residue polypeptide: MARVEL domain-containing protein 2 (555 aa).

A compositionally biased stretch (basic and acidic residues) spans M1–R20. The interval M1–A71 is disordered. Over M1–R191 the chain is Cytoplasmic. A compositionally biased stretch (pro residues) spans P46–G59. Phosphoserine occurs at positions 117, 121, and 158. Positions P118–N142 are disordered. Residue T163 is modified to Phosphothreonine. The 180-residue stretch at S185–R364 folds into the MARVEL domain. A helical transmembrane segment spans residues I192 to I212. The Extracellular segment spans residues H213 to P251. The chain crosses the membrane as a helical span at residues F252–M272. At S273–L288 the chain is on the cytoplasmic side. A helical transmembrane segment spans residues T289–V309. Over N310–Q338 the chain is Extracellular. The chain crosses the membrane as a helical span at residues I339–C359. The Cytoplasmic segment spans residues L360–P555. S384 carries the phosphoserine modification. Residue K408 forms a Glycyl lysine isopeptide (Lys-Gly) (interchain with G-Cter in ubiquitin) linkage. Residues P437–N548 enclose the OCEL domain. The stretch at E521–K545 forms a coiled coil.

It belongs to the ELL/occludin family. In terms of assembly, interacts with TJP1. Interacts with the ubiquitin ligase ITCH. Interacts (via C-terminal cytoplasmic domain) with LSR (via the cytoplasmic domain), ILDR1 and ILDR2; the interaction is required to recruit MARVELD2 to tricellular contacts. Ubiquitinated by ITCH; but this ubiquitination does not lead to proteasomal degradation. Polyubiquitinated at Lys-408 via 'Lys-63'-linked ubiquitin chains; deubiquitinated by USP53. In terms of processing, phosphorylated. In terms of tissue distribution, detected in small intestine, stomach and kidney, in epithelial cells. Detected in pancreas, retina and lung, and in stria vascularis, utricle and the organ of Conti in the inner ear (at protein level). Predominantly detected in small intestine, lung and kidney, with lower levels in liver, testis and brain. In colon, expressed in the entire crypts.

The protein localises to the cell membrane. It is found in the cell junction. Its subcellular location is the tight junction. Plays a role in the formation of tricellular tight junctions and of epithelial barriers. Required for normal hearing via its role in the separation of the endolymphatic and perilymphatic spaces of the organ of Corti in the inner ear, and for normal survival of hair cells in the organ of Corti. This is MARVEL domain-containing protein 2 from Mus musculus (Mouse).